Here is a 411-residue protein sequence, read N- to C-terminus: Serine--tRNA ligase (411 aa).

Thr226–Glu228 provides a ligand contact to L-serine. Arg257–Glu259 is a binding site for ATP. Glu280 provides a ligand contact to L-serine. Glu344–Ser347 provides a ligand contact to ATP. L-serine is bound at residue Ser379.

This sequence belongs to the class-II aminoacyl-tRNA synthetase family. Type-1 seryl-tRNA synthetase subfamily. Homodimer. The tRNA molecule binds across the dimer.

The protein resides in the cytoplasm. The enzyme catalyses tRNA(Ser) + L-serine + ATP = L-seryl-tRNA(Ser) + AMP + diphosphate + H(+). It catalyses the reaction tRNA(Sec) + L-serine + ATP = L-seryl-tRNA(Sec) + AMP + diphosphate + H(+). It participates in aminoacyl-tRNA biosynthesis; selenocysteinyl-tRNA(Sec) biosynthesis; L-seryl-tRNA(Sec) from L-serine and tRNA(Sec): step 1/1. Its function is as follows. Catalyzes the attachment of serine to tRNA(Ser). Is also able to aminoacylate tRNA(Sec) with serine, to form the misacylated tRNA L-seryl-tRNA(Sec), which will be further converted into selenocysteinyl-tRNA(Sec). The sequence is that of Serine--tRNA ligase from Campylobacter jejuni (strain RM1221).